Here is an 86-residue protein sequence, read N- to C-terminus: Large ribosomal subunit protein eL20 (86 aa).

Belongs to the eukaryotic ribosomal protein eL20 family. In terms of assembly, part of the 50S ribosomal subunit. Binds 23S rRNA.

This is Large ribosomal subunit protein eL20 from Saccharolobus islandicus (strain Y.N.15.51 / Yellowstone #2) (Sulfolobus islandicus).